Consider the following 673-residue polypeptide: uncharacterized protein (673 aa).

Residues 1–95 (MLNGEKSALG…QSSAIADSIG (95 aa)) are disordered. Over residues 13-40 (PSNSNSSSKLNAKSPNFIPSSSNIPRSS) the composition is skewed to low complexity. Residues 42–60 (KTKEHSADRKPHRNSEKKT) show a composition bias toward basic and acidic residues. An RING-type zinc finger spans residues 214–273 (CPFCLEEKPVAARMSRCGHVYCFSCLLRFVETPTAAEVKAAETSGTKIVKCGHRSCPICW). Positions 649–673 (SAPSKNSKNKKKKKLVLLSTGAAHR) are disordered.

The protein localises to the cytoplasm. Its subcellular location is the nucleus. This is an uncharacterized protein from Schizosaccharomyces pombe (strain 972 / ATCC 24843) (Fission yeast).